Consider the following 1692-residue polypeptide: Flagellar attachment zone protein 1 (1692 aa).

3 coiled-coil regions span residues 613-657 (REQE…KLQK), 684-864 (VTLD…HKVR), and 903-1607 (NDHM…SALE). 37 consecutive repeat copies span residues 1012–1025 (EELELKAAENEKLA), 1026–1039 (EELELKAAENEKLA), 1040–1053 (EELELKVAENEKLA), 1054–1067 (EELELKVAENEKLA), 1068–1081 (EELELKAAENEKLA), 1082–1095 (EELELKAAENEKLA), 1096–1109 (EELELKAAENEKLA), 1110–1123 (EELELKAAENEKLA), 1124–1137 (EELELKAAENEKLA), 1138–1151 (EELELKAAENEKLA), 1152–1165 (EELELKAAENEKLA), 1166–1179 (EELELKVAENEKLA), 1180–1193 (EELELKAAENEKLA), 1194–1207 (EELELKVAENEKLA), 1208–1221 (EELELKAAENEKLA), 1222–1235 (EELELKAAENEKLA), 1236–1249 (EELELKAAENEKLA), 1250–1263 (EELELKAAENEKLA), 1264–1277 (EELELKVAENEKLA), 1278–1291 (EELELKAAENEKLA), 1292–1305 (EELELKVAENEKLA), 1306–1319 (EELELKAAENEKLA), 1320–1333 (EELELKVAENEKLA), 1334–1347 (EELELKAAENEKLA), 1348–1361 (EELELKVAENEKLA), 1362–1375 (EELELKAAENEKLA), 1376–1389 (EELELKAAENEKLA), 1390–1403 (EELELKAAENEKLA), 1404–1417 (EELELKAAENEKLA), 1418–1431 (EELELKAAENEKLA), 1432–1445 (EELELKVAENEKLA), 1446–1459 (EELELKAAENEKLA), 1460–1473 (EELELKVAENEKLA), 1474–1487 (EELELKAAENEKLA), 1488–1501 (EELELKAAENEKLA), 1502–1515 (EELELKAAENEKLA), and 1516–1529 (EELELKVAENKRLA). The 37 X 14 AA tandem repeats of E-E-L-E-L-K-[VA]-A-E-N-E-K-L-A stretch occupies residues 1012 to 1529 (EELELKAAEN…LKVAENKRLA (518 aa)).

The protein localises to the cell projection. The protein resides in the cilium. It is found in the flagellum. A component of FAZ filament that is required for correct FAZ assembly and attachment. Not essential for new flagellum growth. The chain is Flagellar attachment zone protein 1 from Trypanosoma brucei brucei (strain 927/4 GUTat10.1).